A 554-amino-acid chain; its full sequence is Chaperonin GroEL (554 aa).

ATP contacts are provided by residues 30–33 (TLGP), Lys51, 87–91 (DGTTT), Gly415, 479–481 (NAA), and Asp495.

The protein belongs to the chaperonin (HSP60) family. As to quaternary structure, forms a cylinder of 14 subunits composed of two heptameric rings stacked back-to-back. Interacts with the co-chaperonin GroES.

Its subcellular location is the cytoplasm. It carries out the reaction ATP + H2O + a folded polypeptide = ADP + phosphate + an unfolded polypeptide.. Functionally, together with its co-chaperonin GroES, plays an essential role in assisting protein folding. The GroEL-GroES system forms a nano-cage that allows encapsulation of the non-native substrate proteins and provides a physical environment optimized to promote and accelerate protein folding. The chain is Chaperonin GroEL from Nitrosococcus oceani (strain ATCC 19707 / BCRC 17464 / JCM 30415 / NCIMB 11848 / C-107).